Consider the following 277-residue polypeptide: Methyltransferase str3 (277 aa).

Belongs to the methyltransferase superfamily. LaeA methyltransferase family.

Its pathway is mycotoxin biosynthesis. Its function is as follows. Methyltransferase; part of the gene cluster that mediates the biosynthesis of strobilurin A, an antifungal polyketide that contains a key beta-methoxyacrylate toxophore that targets the complex III of the mitochondrial electron transport chain. Strobilurin biosynthesis begins with construction of benzoyl CoA by step-wise elimination of ammonia from phenylalanine by the phenylalanine ammonia-lyase str11, oxygenation by str8 and retro-Claisen reaction to form benzoic acid, which is activated to its CoA thiolester benzoyl CoA by the dedicated CoA ligase str10. Benzoyl CoA forms the starter unit for the highly reducing polyketide synthase stpks1 that produces the polyketide prestrobilutin A. The FAD-dependent oxygenase str9 then catalyzes the key oxidative rearrangement responsible for the creation of the beta-methoxyacrylate toxophore. Str9 performs epoxidation of the 2,3 olefin of prestrobilutin A, followed by Meinwald rearrangement to furnish the aldehyde intermediate. Rapid enolization of the aldehyde intermediate would give the beta-methoxyacrylate skeleton and methylations catalyzed by str2 and str3 complete the synthesis and lead to the production of strobilurin A. The short-chain dehydrogenase stl2 and the dehydrogenase str4 play a role in the shunt pathway leading to the production of bolineol. The cluster encodes no obvious halogenase gene that could be involved in production of strobilurin B, nor any obvious dimethylallyl-transferase that could be involved in the production of strobilurin G. It is possible that unknown proteins encoded in, or near, the cluster (such as str1 or stl1) may form new classes of halogenases or dimethylally-transferases, or that the responsible genes are located elsewhere on the genome. Similarly, proteins encoded by str5/str6 hydrolases appear to have no chemical role in the biosynthesis of strobilurin A. Finally, no obvious self-resistance gene is found within the cluster. This chain is Methyltransferase str3, found in Strobilurus tenacellus.